The following is a 90-amino-acid chain: Chaplin-G (90 aa).

An N-terminal signal peptide occupies residues 1 to 27 (MSRIAKAAGVALGTGAVVLSGTGMAMA). Residues 38–78 (SPGVLSGNVVQVPVHVPVNLCGNTIDVIGLLNPAFGNACEN) enclose the Chaplin domain. An intrachain disulfide couples C58 to C76.

This sequence belongs to the chaplin family. Short chaplin subfamily.

The protein resides in the cell surface. The protein localises to the secreted. Its subcellular location is the cell wall. One of 8 partially redundant surface-active proteins required for efficient formation of aerial mycelium; the short chaplins assemble into a hydrophobic, amyloidal fibrillar surface layer that envelopes and protects aerial hyphae and spores, presumably anchored to the long chaplins. Chaplins have an overlapping function with the surface-active SapB peptide; chaplins are essential on minimal medium while on rich medium both chaplins and SapB are required for efficient aerial hyphae formation. Chaplins are also involved in cell attachment to a hydrophobic surface. Forms amyloid fibrils in vitro probably composed of stacked beta-sheets, at low extracellular concentrations individually restores the ability to form aerial hyphae to a chaplin-deficient strain. A small chaplin extract (ChpD, ChpE, ChpF, ChpG and ChpH) self-assembles into 2 different amyloids; small fibrils at the air-water interface form an amphipathic membrane that resembles spore-surface structures involved in aerial hyphae formation, and hydrophilic fibrils in solution that resemble the fibers that attach cells to a hydrophobic surface. At the air-water interface the hydrophilic surface is in contact with water (probably equivalent to the peptidoglycan layer), while the hydrophobic face is exposed to the air, making the surface of the aerial hyphae hydrophobic. A small chaplin extract applied to a chaplin-deficient strain restores aerial hyphae formation. The small chaplin extract forms an amyloid-like structure similar to that seen on the surface of cells without rodlets (rdlA-rdlB deletions), and is highly surface active, reducing surface tension from 72 to 26 mJ/m(2), which probably allows escape of hyphae from an aqueous environment into air. ChpF and ChpG are sufficient to restore the rodlet layer and hydrophobicity to a strain deleted for the other 6 chaplin genes. The protein is Chaplin-G of Streptomyces coelicolor (strain ATCC BAA-471 / A3(2) / M145).